The chain runs to 610 residues: UvrABC system protein C (610 aa).

The GIY-YIG domain maps to 16–94 (SQPGVYRMYD…IKLYQPRYNV (79 aa)). Residues 204–239 (DQVLTQLIARMEKASQDLAFEEAARIRDQIQAVRRV) form the UVR domain.

It belongs to the UvrC family. As to quaternary structure, interacts with UvrB in an incision complex.

The protein localises to the cytoplasm. In terms of biological role, the UvrABC repair system catalyzes the recognition and processing of DNA lesions. UvrC both incises the 5' and 3' sides of the lesion. The N-terminal half is responsible for the 3' incision and the C-terminal half is responsible for the 5' incision. This chain is UvrABC system protein C, found in Salmonella schwarzengrund (strain CVM19633).